The chain runs to 368 residues: Phosphoserine aminotransferase (368 aa).

Arginine 44 is a binding site for L-glutamate. Pyridoxal 5'-phosphate-binding positions include 78 to 79 (AT), tryptophan 104, threonine 157, aspartate 179, and glutamine 202. Lysine 203 bears the N6-(pyridoxal phosphate)lysine mark. Pyridoxal 5'-phosphate is bound at residue 244–245 (NT).

The protein belongs to the class-V pyridoxal-phosphate-dependent aminotransferase family. SerC subfamily. Homodimer. Pyridoxal 5'-phosphate is required as a cofactor.

Its subcellular location is the cytoplasm. It carries out the reaction O-phospho-L-serine + 2-oxoglutarate = 3-phosphooxypyruvate + L-glutamate. The catalysed reaction is 4-(phosphooxy)-L-threonine + 2-oxoglutarate = (R)-3-hydroxy-2-oxo-4-phosphooxybutanoate + L-glutamate. The protein operates within amino-acid biosynthesis; L-serine biosynthesis; L-serine from 3-phospho-D-glycerate: step 2/3. Its pathway is cofactor biosynthesis; pyridoxine 5'-phosphate biosynthesis; pyridoxine 5'-phosphate from D-erythrose 4-phosphate: step 3/5. Functionally, catalyzes the reversible conversion of 3-phosphohydroxypyruvate to phosphoserine and of 3-hydroxy-2-oxo-4-phosphonooxybutanoate to phosphohydroxythreonine. The chain is Phosphoserine aminotransferase from Neisseria meningitidis serogroup A / serotype 4A (strain DSM 15465 / Z2491).